The following is a 199-amino-acid chain: Thymidine kinase (199 aa).

Residues 15–22 (GSMFSGKS) and 88–91 (DEVQ) each bind ATP. Glutamate 89 acts as the Proton acceptor in catalysis. 4 residues coordinate Zn(2+): cysteine 145, cysteine 148, cysteine 183, and histidine 186.

Belongs to the thymidine kinase family. As to quaternary structure, homotetramer.

The protein localises to the cytoplasm. The catalysed reaction is thymidine + ATP = dTMP + ADP + H(+). This chain is Thymidine kinase, found in Staphylococcus epidermidis (strain ATCC 12228 / FDA PCI 1200).